We begin with the raw amino-acid sequence, 433 residues long: Enolase 2 (433 aa).

The tract at residues 34-56 is disordered; sequence RGMVPSGASTGEHEAVELRDGDK. Positions 44–56 are enriched in basic and acidic residues; that stretch reads GEHEAVELRDGDK. Q163 is a (2R)-2-phosphoglycerate binding site. The Proton donor role is filled by E205. Residues D243, E290, and D317 each contribute to the Mg(2+) site. (2R)-2-phosphoglycerate is bound by residues K342, R371, S372, and K393. Catalysis depends on K342, which acts as the Proton acceptor.

Belongs to the enolase family. It depends on Mg(2+) as a cofactor.

The protein localises to the cytoplasm. The protein resides in the secreted. It is found in the cell surface. It carries out the reaction (2R)-2-phosphoglycerate = phosphoenolpyruvate + H2O. It functions in the pathway carbohydrate degradation; glycolysis; pyruvate from D-glyceraldehyde 3-phosphate: step 4/5. Functionally, catalyzes the reversible conversion of 2-phosphoglycerate (2-PG) into phosphoenolpyruvate (PEP). It is essential for the degradation of carbohydrates via glycolysis. The protein is Enolase 2 of Lactococcus lactis subsp. cremoris (strain SK11).